The primary structure comprises 361 residues: Homer protein homolog 3 (361 aa).

The interval 1 to 80 (MSTAREQPIF…TKTSQKFGQW (80 aa)) is required for interaction with NFATC2. The 113-residue stretch at 1-113 (MSTAREQPIF…EKFQEVKEAA (113 aa)) folds into the WH1 domain. The tract at residues 114–169 (RLAREKSQDGGELTSPALGLASHQVPPSPLVSANGPGEEKLFRSQSADAPGPTERE) is disordered. Phosphoserine occurs at positions 120 and 159. Coiled-coil stretches lie at residues 191–243 (ALQD…SEVT) and 254–358 (GQSL…RLAE).

Belongs to the Homer family. In terms of assembly, tetramer. Isoform 1 and isoform 2 encode coiled-coil structures that mediate homo- and heteromultimerization. Interacts with NFATC2; interaction is calcium independent; interaction competes with PPP3CA for NFATC2 binding; interaction is reduced by AKT activation. Interacts with NFATC1 and NFATC4. Interacts with SHANK1; forms a high-order complex at least composed of SHANK1 and HOMER3; the complex formation is regulated by CAMK2A-mediated phosphorylation.

It is found in the cytoplasm. It localises to the postsynaptic density. The protein localises to the synapse. In terms of biological role, postsynaptic density scaffolding protein. Binds and cross-links cytoplasmic regions of GRM1, GRM5, ITPR1, DNM3, RYR1, RYR2, SHANK1 and SHANK3. By physically linking GRM1 and GRM5 with ER-associated ITPR1 receptors, it aids the coupling of surface receptors to intracellular calcium release. Isoforms can be differently regulated and may play an important role in maintaining the plasticity at glutamatergic synapses. Negatively regulates T cell activation by inhibiting the calcineurin-NFAT pathway. Acts by competing with calcineurin/PPP3CA for NFAT protein binding, hence preventing NFAT activation by PPP3CA. The sequence is that of Homer protein homolog 3 from Homo sapiens (Human).